Reading from the N-terminus, the 366-residue chain is MHLLSSLAALAAAITVAFADVQQCNAENASVRKEWGSLTPDEQLGYIDAVWCLRSLPSRLPNEQYPGVQDRVDDFVATHINLTMVIHRNAPFLPWHRQYIHLWETALREECGYNGTVPYWNWTKNPDLYTNPVFDTTQSPETSLSLSGDGAYVAPSPTDPDPDPGLDFAPGRGGGCVLDGPFKDWPVRMGPFSAAQAYPYAPVPENAFAHNPRCLQRNLDVARIQYYNNPSVLESLLAAPSIAVFQDILDRTIPGTWQQAIGAHGGGHISVGPTLADVFASPQDPVFMLHHGFIDLLWDAWQRSGSDTGEGTDRMRALNGTTMYTNPPGAEEATLDTVMEFGVLGSPKKIGEVMDIRGGEYCYRYE.

Residues 1–18 form the signal peptide; that stretch reads MHLLSSLAALAAAITVAF. N-linked (GlcNAc...) asparagine glycans are attached at residues N28 and N81. Cu cation-binding residues include H87 and H96. Residues N114 and N121 are each glycosylated (N-linked (GlcNAc...) asparagine). H291 serves as a coordination point for Cu cation. N-linked (GlcNAc...) asparagine glycosylation is present at N319.

This sequence belongs to the tyrosinase family. It depends on Cu(2+) as a cofactor.

Its pathway is pigment biosynthesis. With respect to regulation, activity is inhibited by 2,3-dihydroxynaphthalene, phenylhydrazine, diethyl dithiocarbamate and 8-hydroxyquinolene. Nonribosomal peptide synthetase; part of the pathway that mediates the biosynthesis of the gray-brown conidiophore pigment. The first step of the pathway is performed by the nonribosomal peptide synthetase ivoA that catalyzes ATP-dependent unidirectional stereoinversion of L-tryptophan to D-tryptophan with complete conversion. While the stereoinversion is catalyzed by the epimerization (E) domain of ivoA, the terminal condensation (C) domain stereoselectively hydrolyzes D-tryptophanyl-S-phosphopantetheine thioester and thus represents a non-canonical C domain function. D-tryptophan is acetylated, probably by an endogenous acetyltransferase. N-acetyltryptophan is further 6-hydroxylated into N-acetyl-6-hydroxytryptophan (AHT) by the cytochrome P450 monooxygenase ivoC. N-acetyl-6-hydroxytryptophan is substrate of the N-acetyl-6-hydroxytryptophan oxidase ivoB to produce the gray-brown conidiophore pigment. The protein is N-acetyl-6-hydroxytryptophan oxidase ivoB of Emericella nidulans (strain FGSC A4 / ATCC 38163 / CBS 112.46 / NRRL 194 / M139) (Aspergillus nidulans).